The chain runs to 262 residues: UPF0619 GPI-anchored membrane protein C1322.10 (262 aa).

A signal peptide spans methionine 1–alanine 20. 2 disordered regions span residues serine 136–threonine 165 and isoleucine 175–isoleucine 194. N-linked (GlcNAc...) asparagine glycosylation is found at asparagine 207 and asparagine 227. Residue asparagine 242 is the site of GPI-like-anchor amidated asparagine attachment. Residues glycine 243–alanine 262 constitute a propeptide, removed in mature form.

The protein belongs to the UPF0619 family.

It is found in the golgi apparatus membrane. The protein resides in the cell membrane. The chain is UPF0619 GPI-anchored membrane protein C1322.10 from Schizosaccharomyces pombe (strain 972 / ATCC 24843) (Fission yeast).